The primary structure comprises 293 residues: tRNA pseudouridine synthase B (293 aa).

Asp38 serves as the catalytic Nucleophile.

It belongs to the pseudouridine synthase TruB family. Type 1 subfamily.

The enzyme catalyses uridine(55) in tRNA = pseudouridine(55) in tRNA. Its function is as follows. Responsible for synthesis of pseudouridine from uracil-55 in the psi GC loop of transfer RNAs. The chain is tRNA pseudouridine synthase B from Microcystis aeruginosa (strain NIES-843 / IAM M-2473).